Reading from the N-terminus, the 156-residue chain is uncharacterized protein (156 aa).

The region spanning 1–145 is the N-acetyltransferase domain; the sequence is MIIRKFSSKD…DAILMIKKKP (145 aa).

This sequence belongs to the acetyltransferase family.

It is found in the cytoplasm. This is an uncharacterized protein from Methanocaldococcus jannaschii (strain ATCC 43067 / DSM 2661 / JAL-1 / JCM 10045 / NBRC 100440) (Methanococcus jannaschii).